We begin with the raw amino-acid sequence, 517 residues long: Cytochrome P450 CYP72A616 (517 aa).

A helical transmembrane segment spans residues 5-25 (VLGALAALLAAAAAWVMRAAA). Cysteine 465 is a binding site for heme.

Belongs to the cytochrome P450 family. In terms of tissue distribution, mainly expressed in leaves and, at low levels, in roots, fruits and stems.

Its subcellular location is the membrane. It functions in the pathway steroid metabolism; cholesterol metabolism. Functionally, involved in the biosynthesis of spiroketal steroid and saponin natural products from cholesterol such as diosgenin and analogs (e.g. furostanol and spirostanol), plant defense compounds used as main precursors for the industrial production of steroid hormones. During the 5,6-spiroketalization of cholesterol, may catalyze the 27-monohydroxylation of furostanol-type steroid to an intermediate product that undergoes a stereospecific formation of the terminal heterocycle to yield diosgenin. In Paris polyphylla (Daiswa polyphylla), this protein is Cytochrome P450 CYP72A616.